The chain runs to 206 residues: uncharacterized protein (206 aa).

A helical membrane pass occupies residues 4 to 24; it reads LLVVIAVALFIAAIVVLVVAI.

It localises to the membrane. This is an uncharacterized protein from Mycobacterium tuberculosis (strain CDC 1551 / Oshkosh).